The following is a 331-amino-acid chain: Ribose-phosphate pyrophosphokinase (331 aa).

Residue 55–57 (DGE) coordinates ATP. Histidine 148 and aspartate 187 together coordinate Mg(2+). The active site involves lysine 211. D-ribose 5-phosphate contacts are provided by residues arginine 213, aspartate 237, and 241–245 (DTAGT).

It belongs to the ribose-phosphate pyrophosphokinase family. Class I subfamily. In terms of assembly, homohexamer. Mg(2+) serves as cofactor.

It is found in the cytoplasm. The catalysed reaction is D-ribose 5-phosphate + ATP = 5-phospho-alpha-D-ribose 1-diphosphate + AMP + H(+). The protein operates within metabolic intermediate biosynthesis; 5-phospho-alpha-D-ribose 1-diphosphate biosynthesis; 5-phospho-alpha-D-ribose 1-diphosphate from D-ribose 5-phosphate (route I): step 1/1. Its function is as follows. Involved in the biosynthesis of the central metabolite phospho-alpha-D-ribosyl-1-pyrophosphate (PRPP) via the transfer of pyrophosphoryl group from ATP to 1-hydroxyl of ribose-5-phosphate (Rib-5-P). The protein is Ribose-phosphate pyrophosphokinase of Synechococcus elongatus (strain ATCC 33912 / PCC 7942 / FACHB-805) (Anacystis nidulans R2).